A 206-amino-acid polypeptide reads, in one-letter code: MQKKLDSLLKAAGITLPDRQKQQLLGYVGMLDKWNKAYNLTSVRDPQQMLVRHILDSIVVNPHLQGKRFIDVGTGPGLPGIPLAIVRPDSHFTLLDSLGKRVRFLRQVQHELGLTNVEPVQSRVEEFPAEPPFDGVISRAFASLQDMLSWCHHLPAKGQGRFYALKGVRPDEELTQLPPGIELESVVRLQVPELEGERHLVILKAN.

S-adenosyl-L-methionine contacts are provided by residues Gly-73, Leu-78, 124–125 (VE), and Arg-139.

This sequence belongs to the methyltransferase superfamily. RNA methyltransferase RsmG family.

The protein resides in the cytoplasm. It catalyses the reaction guanosine(527) in 16S rRNA + S-adenosyl-L-methionine = N(7)-methylguanosine(527) in 16S rRNA + S-adenosyl-L-homocysteine. Functionally, specifically methylates the N7 position of guanine in position 527 of 16S rRNA. This chain is Ribosomal RNA small subunit methyltransferase G, found in Serratia proteamaculans (strain 568).